Consider the following 270-residue polypeptide: NAD(P)H-hydrate epimerase (270 aa).

In terms of domain architecture, YjeF N-terminal spans 25 to 234 (FQQLMDLMQN…DLLAPEEIYQ (210 aa)). 73 to 77 (DNGGQ) is a binding site for (6S)-NADPHX. K(+) is bound by residues asparagine 74 and aspartate 144. (6S)-NADPHX contacts are provided by residues 148–154 (GVGLYGH) and glutamate 177. Threonine 180 is a K(+) binding site.

Belongs to the NnrE/AIBP family. Requires K(+) as cofactor.

The enzyme catalyses (6R)-NADHX = (6S)-NADHX. The catalysed reaction is (6R)-NADPHX = (6S)-NADPHX. Its function is as follows. Catalyzes the epimerization of the S- and R-forms of NAD(P)HX, a damaged form of NAD(P)H that is a result of enzymatic or heat-dependent hydration. This is a prerequisite for the S-specific NAD(P)H-hydrate dehydratase to allow the repair of both epimers of NAD(P)HX. The protein is NAD(P)H-hydrate epimerase of Legionella pneumophila (strain Paris).